The primary structure comprises 449 residues: Histidinol dehydrogenase (449 aa).

NAD(+)-binding residues include tyrosine 135, glutamine 199, and asparagine 229. 3 residues coordinate substrate: threonine 252, glutamine 274, and histidine 277. 2 residues coordinate Zn(2+): glutamine 274 and histidine 277. Active-site proton acceptor residues include glutamate 343 and histidine 344. Substrate is bound by residues histidine 344, aspartate 377, glutamate 431, and histidine 436. Aspartate 377 contributes to the Zn(2+) binding site. Histidine 436 contacts Zn(2+).

This sequence belongs to the histidinol dehydrogenase family. The cofactor is Zn(2+).

The catalysed reaction is L-histidinol + 2 NAD(+) + H2O = L-histidine + 2 NADH + 3 H(+). It functions in the pathway amino-acid biosynthesis; L-histidine biosynthesis; L-histidine from 5-phospho-alpha-D-ribose 1-diphosphate: step 9/9. Functionally, catalyzes the sequential NAD-dependent oxidations of L-histidinol to L-histidinaldehyde and then to L-histidine. The polypeptide is Histidinol dehydrogenase (Corynebacterium diphtheriae (strain ATCC 700971 / NCTC 13129 / Biotype gravis)).